The sequence spans 81 residues: HssA/B-like protein 5 (81 aa).

This sequence belongs to the hssA/B family.

This is HssA/B-like protein 5 (hssl5) from Dictyostelium discoideum (Social amoeba).